A 118-amino-acid chain; its full sequence is Small ribosomal subunit protein uS13 (118 aa).

Positions 94-118 are disordered; that stretch reads SLPVHGQRTKTNARTCKGPRKPIKK.

The protein belongs to the universal ribosomal protein uS13 family. As to quaternary structure, part of the 30S ribosomal subunit. Forms a loose heterodimer with protein S19. Forms two bridges to the 50S subunit in the 70S ribosome.

Functionally, located at the top of the head of the 30S subunit, it contacts several helices of the 16S rRNA. In the 70S ribosome it contacts the 23S rRNA (bridge B1a) and protein L5 of the 50S subunit (bridge B1b), connecting the 2 subunits; these bridges are implicated in subunit movement. Contacts the tRNAs in the A and P-sites. This chain is Small ribosomal subunit protein uS13, found in Buchnera aphidicola subsp. Acyrthosiphon pisum (strain 5A).